Here is a 257-residue protein sequence, read N- to C-terminus: tRNA-cytidine(32) 2-sulfurtransferase (257 aa).

A PP-loop motif motif is present at residues 37–42 (SGGKDS). 3 residues coordinate [4Fe-4S] cluster: Cys-112, Cys-115, and Cys-202.

This sequence belongs to the TtcA family. As to quaternary structure, homodimer. Mg(2+) serves as cofactor. It depends on [4Fe-4S] cluster as a cofactor.

It is found in the cytoplasm. The catalysed reaction is cytidine(32) in tRNA + S-sulfanyl-L-cysteinyl-[cysteine desulfurase] + AH2 + ATP = 2-thiocytidine(32) in tRNA + L-cysteinyl-[cysteine desulfurase] + A + AMP + diphosphate + H(+). It participates in tRNA modification. Functionally, catalyzes the ATP-dependent 2-thiolation of cytidine in position 32 of tRNA, to form 2-thiocytidine (s(2)C32). The sulfur atoms are provided by the cysteine/cysteine desulfurase (IscS) system. The protein is tRNA-cytidine(32) 2-sulfurtransferase of Geobacter sulfurreducens (strain ATCC 51573 / DSM 12127 / PCA).